A 277-amino-acid polypeptide reads, in one-letter code: 4-hydroxy-3-prenylphenylpyruvate oxygenase/4-hydroxy-3-prenylbenzoate synthase (277 aa).

This sequence belongs to the aldolase class II family. Homotetramer. The cofactor is Fe(2+).

It catalyses the reaction 3-dimethylallyl-4-hydroxyphenylpyruvate + O2 = 3-dimethylallyl-4-hydroxymandelate + CO2. It carries out the reaction 3-dimethylallyl-4-hydroxymandelate + O2 = 3-dimethylallyl-4-hydroxybenzoate + CO2 + H2O. Its pathway is antibiotic biosynthesis. Activated by ascorbate. Involved in the biosynthesis of ring A of the aminocoumarin antibiotic clorobiocin. Catalyzes two consecutive oxidative decarboxylations of 3-dimethylallyl-4-hydroxyphenylpyruvate (3DMA-4HPP) to yield 3-dimethylallyl-4-hydroxybenzoate (3DMA-4HB) via the 3-dimethylallyl-4-hydroxymandelic acid (3DMA-4HMA) intermediate. The polypeptide is 4-hydroxy-3-prenylphenylpyruvate oxygenase/4-hydroxy-3-prenylbenzoate synthase (Streptomyces roseochromogenus subsp. oscitans).